A 242-amino-acid polypeptide reads, in one-letter code: U1 small nuclear ribonucleoprotein C (242 aa).

The Matrin-type; degenerate zinc-finger motif lies at 3–35 (YLGDYCDVYLTHDSMSVRKAHNSGRNHLRNVVE). The tract at residues 60 to 242 (GQASSNPMLQ…SSPGPSQEGK (183 aa)) is disordered. Pro residues-rich tracts occupy residues 90–107 (MLPPPPPFGMPGAPPGAP), 136–149 (PPMPGDLPPPPLPN), 156–183 (PFPPPNGFPPNFQFPPPGAAGFPPPPIP), and 201–213 (PVPPPGFPLPGAP). Positions 231 to 242 (PASSPGPSQEGK) are enriched in polar residues.

Belongs to the U1 small nuclear ribonucleoprotein C family. As to quaternary structure, U1 snRNP is composed of the 7 core Sm proteins B/B', D1, D2, D3, E, F and G that assemble in a heptameric protein ring on the Sm site of the small nuclear RNA to form the core snRNP, and at least 3 U1 snRNP-specific proteins U1-70K, U1-A and U1-C. U1-C interacts with U1 snRNA and the 5' splice-site region of the pre-mRNA.

The protein resides in the nucleus. Component of the spliceosomal U1 snRNP, which is essential for recognition of the pre-mRNA 5' splice-site and the subsequent assembly of the spliceosome. U1-C is directly involved in initial 5' splice-site recognition for both constitutive and regulated alternative splicing. The interaction with the 5' splice-site seems to precede base-pairing between the pre-mRNA and the U1 snRNA. Stimulates commitment or early (E) complex formation by stabilizing the base pairing of the 5' end of the U1 snRNA and the 5' splice-site region. The sequence is that of U1 small nuclear ribonucleoprotein C from Ajellomyces capsulatus (strain G186AR / H82 / ATCC MYA-2454 / RMSCC 2432) (Darling's disease fungus).